The primary structure comprises 799 residues: E3 UFM1-protein ligase 1 homolog (799 aa).

The tract at residues 429-483 (TTTTTTTQPSKKKDNLINSDDDDNQDNNKKSSKGKNKKSKQQQSSIQKLINDSED) is disordered. Residues 458–468 (KSSKGKNKKSK) are compositionally biased toward basic residues. Residues 469–478 (QQQSSIQKLI) are compositionally biased toward low complexity.

Belongs to the UFL1 family.

In terms of biological role, E3 UFM1-protein ligase that mediates ufmylation of target proteins. In Dictyostelium discoideum (Social amoeba), this protein is E3 UFM1-protein ligase 1 homolog.